Reading from the N-terminus, the 943-residue chain is Translation initiation factor IF-2 (943 aa).

Residues 29–349 (LSVKSHSSSV…NNRGNSAPKL (321 aa)) form a disordered region. Composition is skewed to basic and acidic residues over residues 69 to 82 (PKEE…DKAS), 112 to 137 (FKAE…DNRN), 145 to 155 (QGKRHNNDRRN), 163 to 196 (DHNK…RDNA), and 224 to 253 (RQSE…EKQQ). Over residues 254-266 (AEVAVQKAAAETK) the composition is skewed to low complexity. Residues 296–309 (KSRDNHRVNEDGPK) are compositionally biased toward basic and acidic residues. The segment covering 313 to 332 (NNKWNNQNQVRNQRNSNWNK) has biased composition (low complexity). Positions 445–614 (ERAPVVTIMG…LLVAEVEELK (170 aa)) constitute a tr-type G domain. The G1 stretch occupies residues 454-461 (GHVDHGKT). GTP is bound at residue 454–461 (GHVDHGKT). A G2 region spans residues 479-483 (GITQH). The segment at 500 to 503 (DTPG) is G3. GTP-binding positions include 500–504 (DTPGH) and 554–557 (NKID). Residues 554–557 (NKID) form a G4 region. Residues 590-592 (SAK) form a G5 region.

This sequence belongs to the TRAFAC class translation factor GTPase superfamily. Classic translation factor GTPase family. IF-2 subfamily.

Its subcellular location is the cytoplasm. Functionally, one of the essential components for the initiation of protein synthesis. Protects formylmethionyl-tRNA from spontaneous hydrolysis and promotes its binding to the 30S ribosomal subunits. Also involved in the hydrolysis of GTP during the formation of the 70S ribosomal complex. The chain is Translation initiation factor IF-2 from Streptococcus thermophilus (strain ATCC BAA-491 / LMD-9).